Here is a 526-residue protein sequence, read N- to C-terminus: Putative ankyrin repeat protein R840 (526 aa).

ANK repeat units lie at residues 78–107 (TLNE…NIRS), 108–137 (RDNF…DIRS), 139–167 (KNYA…NIRD), 169–197 (DNCA…DSTS), 198–227 (NFNE…RCRN), 229–255 (SAII…NIRI), 256–285 (DDDY…NIRS), 286–315 (EIDH…DIKS), 317–345 (YDRS…NIRN), 346–375 (INDY…NIRV), 376–405 (DNDS…DIRV), 406–435 (NNYQ…NVSI), 437–467 (NVPL…DINL), 468–497 (ADDM…NVRA), and 499–526 (NDYA…AILS).

The chain is Putative ankyrin repeat protein R840 from Acanthamoeba polyphaga (Amoeba).